The following is a 325-amino-acid chain: MTQSPRACSAPPARPLLIVAGPTASGKSALALAAAQRFGGTIINADAMQCYADWRIITARPTPADEAAAPHRLYGVRRLEEAVDAAWWRGRALAELAAAELPILCGGTGMYLSSLVNGIAPIPDPGPNARAEARRMLAADGPAALHAWLAARDPATATKLRPSDPQRLARAAEVLLGTGRGLAAWHAAPRAGLAGYRVMLLLLDPPRPALREAIAARFEAMLAAGALAEVAAVAARAPDPALPGLRAHGVPELLAHLAGAISLDEAASRAIAATAAYTKRQATWFRHQKLADQRNTHTIRSRLTDSTQFSESTVRSIISFINLSS.

G21–S28 serves as a coordination point for ATP. T23–S28 contacts substrate. The interaction with substrate tRNA stretch occupies residues Q166–R170.

It belongs to the IPP transferase family. As to quaternary structure, monomer. Mg(2+) is required as a cofactor.

The catalysed reaction is adenosine(37) in tRNA + dimethylallyl diphosphate = N(6)-dimethylallyladenosine(37) in tRNA + diphosphate. Its function is as follows. Catalyzes the transfer of a dimethylallyl group onto the adenine at position 37 in tRNAs that read codons beginning with uridine, leading to the formation of N6-(dimethylallyl)adenosine (i(6)A). This Acidiphilium cryptum (strain JF-5) protein is tRNA dimethylallyltransferase.